Reading from the N-terminus, the 588-residue chain is Adenine deaminase (588 aa).

Belongs to the metallo-dependent hydrolases superfamily. Adenine deaminase family. In terms of assembly, homodimer. Requires Mn(2+) as cofactor.

The enzyme catalyses adenine + H2O + H(+) = hypoxanthine + NH4(+). In Escherichia coli O9:H4 (strain HS), this protein is Adenine deaminase.